The sequence spans 152 residues: MFP1 attachment factor 1 (152 aa).

2 disordered regions span residues 1 to 33 and 107 to 152; these read MAEIDSAQSQETVTQETQNKPMTTSFSIWPPTQ and DTVK…ETEP. A WPP region spans residues 12–115; the sequence is TVTQETQNKP…IDTVKSRSAP (104 aa). Positions 134 to 152 are enriched in polar residues; sequence EPSSASGLTGEVSSVETEP.

Interacts with WAP through its WPP domain. Binds to MFP1 and FPP proteins. In terms of tissue distribution, expressed in young tomato leaves, young fruits, and flowers (at protein level).

The protein localises to the nucleus envelope. It localises to the cytoplasm. Its subcellular location is the golgi apparatus. The protein resides in the nucleus. It is found in the nucleus matrix. The protein is MFP1 attachment factor 1 (MAF1) of Solanum lycopersicum (Tomato).